A 468-amino-acid chain; its full sequence is Putrescine aminotransferase (468 aa).

Residues 150 to 151 (GT) and Gln274 each bind pyridoxal 5'-phosphate. Lys300 bears the N6-(pyridoxal phosphate)lysine mark. Pyridoxal 5'-phosphate is bound at residue Thr332.

This sequence belongs to the class-III pyridoxal-phosphate-dependent aminotransferase family. Putrescine aminotransferase subfamily. It depends on pyridoxal 5'-phosphate as a cofactor.

It carries out the reaction an alkane-alpha,omega-diamine + 2-oxoglutarate = an omega-aminoaldehyde + L-glutamate. The enzyme catalyses putrescine + 2-oxoglutarate = 1-pyrroline + L-glutamate + H2O. The catalysed reaction is cadaverine + 2-oxoglutarate = 5-aminopentanal + L-glutamate. The protein operates within amine and polyamine degradation; putrescine degradation; 4-aminobutanal from putrescine (transaminase route): step 1/1. In terms of biological role, catalyzes the aminotransferase reaction from putrescine to 2-oxoglutarate, leading to glutamate and 4-aminobutanal, which spontaneously cyclizes to form 1-pyrroline. This is the first step in one of two pathways for putrescine degradation, where putrescine is converted into 4-aminobutanoate (gamma-aminobutyrate or GABA) via 4-aminobutanal. Also functions as a cadaverine transaminase in a a L-lysine degradation pathway to succinate that proceeds via cadaverine, glutarate and L-2-hydroxyglutarate. The protein is Putrescine aminotransferase of Pectobacterium atrosepticum (strain SCRI 1043 / ATCC BAA-672) (Erwinia carotovora subsp. atroseptica).